The primary structure comprises 101 residues: Small ribosomal subunit protein bS18c (101 aa).

The span at 1–19 (MNKSKRPFTKSKRSFRRRL) shows a compositional bias: basic residues. The segment at 1–23 (MNKSKRPFTKSKRSFRRRLPPIQ) is disordered.

It belongs to the bacterial ribosomal protein bS18 family. In terms of assembly, part of the 30S ribosomal subunit.

It is found in the plastid. Its subcellular location is the chloroplast. This Draba nemorosa (Woodland whitlowgrass) protein is Small ribosomal subunit protein bS18c.